Here is a 24-residue protein sequence, read N- to C-terminus: MPGKVQDFFLCSLLLRIVSAGWCD.

In Escherichia coli, this protein is Positive regulator of RepFIC repA1 expression (repL).